The chain runs to 277 residues: F420-dependent methylenetetrahydromethanopterin dehydrogenase (277 aa).

The disordered stretch occupies residues 249-277 (EKATDSVSRKPHGADGKRLNKTKLMEKPE).

The protein belongs to the MTD family.

The enzyme catalyses 5,10-methylenetetrahydromethanopterin + oxidized coenzyme F420-(gamma-L-Glu)(n) + 2 H(+) = 5,10-methenyl-5,6,7,8-tetrahydromethanopterin + reduced coenzyme F420-(gamma-L-Glu)(n). The protein operates within one-carbon metabolism; methanogenesis from CO(2); 5,10-methylene-5,6,7,8-tetrahydromethanopterin from 5,10-methenyl-5,6,7,8-tetrahydromethanopterin (coenzyme F420 route): step 1/1. In terms of biological role, catalyzes the reversible reduction of methenyl-H(4)MPT(+) to methylene-H(4)MPT. In Methanococcus aeolicus (strain ATCC BAA-1280 / DSM 17508 / OCM 812 / Nankai-3), this protein is F420-dependent methylenetetrahydromethanopterin dehydrogenase.